A 433-amino-acid polypeptide reads, in one-letter code: Enolase (433 aa).

Gln-167 contacts (2R)-2-phosphoglycerate. Glu-209 acts as the Proton donor in catalysis. 3 residues coordinate Mg(2+): Asp-246, Glu-291, and Asp-318. (2R)-2-phosphoglycerate contacts are provided by Lys-343, Arg-372, Ser-373, and Lys-394. Lys-343 serves as the catalytic Proton acceptor.

The protein belongs to the enolase family. As to quaternary structure, component of the RNA degradosome, a multiprotein complex involved in RNA processing and mRNA degradation. Mg(2+) serves as cofactor.

The protein resides in the cytoplasm. It is found in the secreted. Its subcellular location is the cell surface. It carries out the reaction (2R)-2-phosphoglycerate = phosphoenolpyruvate + H2O. It functions in the pathway carbohydrate degradation; glycolysis; pyruvate from D-glyceraldehyde 3-phosphate: step 4/5. Catalyzes the reversible conversion of 2-phosphoglycerate (2-PG) into phosphoenolpyruvate (PEP). It is essential for the degradation of carbohydrates via glycolysis. The polypeptide is Enolase (Marinomonas sp. (strain MWYL1)).